The primary structure comprises 631 residues: Putative ATP-dependent DNA helicase Q1 (631 aa).

The region spanning 118–293 is the Helicase ATP-binding domain; the sequence is INAVMSKEDA…KDMLGIQAAL (176 aa). 131 to 138 provides a ligand contact to ATP; that stretch reads LSTGGGKS. The short motif at 237–240 is the DEVH box element; that stretch reads DEVH. Residues 318–466 form the Helicase C-terminal domain; the sequence is CTEEIAKTIK…NLYNMVRYAA (149 aa). The Zn(2+) site is built by cysteine 471, cysteine 489, cysteine 493, and cysteine 496. The interval 610–631 is disordered; the sequence is ESKSRKRKASSSVEEEDVMVLD. The segment covering 622-631 has biased composition (acidic residues); the sequence is VEEEDVMVLD.

This sequence belongs to the helicase family. RecQ subfamily. Requires Zn(2+) as cofactor.

The protein resides in the nucleus. The catalysed reaction is Couples ATP hydrolysis with the unwinding of duplex DNA by translocating in the 3'-5' direction.. It carries out the reaction ATP + H2O = ADP + phosphate + H(+). Its function is as follows. DNA helicase that may play a role in the repair of DNA that is damaged by ultraviolet light or other mutagens. Exhibits a magnesium-dependent ATP-dependent DNA-helicase activity that unwinds single- and double-stranded DNA in a 3'-5' direction. This is Putative ATP-dependent DNA helicase Q1 from Caenorhabditis elegans.